We begin with the raw amino-acid sequence, 276 residues long: Formamidopyrimidine-DNA glycosylase (276 aa).

Pro-2 (schiff-base intermediate with DNA) is an active-site residue. Glu-3 serves as the catalytic Proton donor. Lys-58 serves as the catalytic Proton donor; for beta-elimination activity. Residues His-92, Arg-111, and Lys-154 each coordinate DNA. The FPG-type zinc-finger motif lies at 239–273; it reads QVYGHAGEECNNCGTILEKIKVNGRGTTFCPHCQV. Catalysis depends on Arg-263, which acts as the Proton donor; for delta-elimination activity.

Belongs to the FPG family. Monomer. Zn(2+) serves as cofactor.

It carries out the reaction Hydrolysis of DNA containing ring-opened 7-methylguanine residues, releasing 2,6-diamino-4-hydroxy-5-(N-methyl)formamidopyrimidine.. It catalyses the reaction 2'-deoxyribonucleotide-(2'-deoxyribose 5'-phosphate)-2'-deoxyribonucleotide-DNA = a 3'-end 2'-deoxyribonucleotide-(2,3-dehydro-2,3-deoxyribose 5'-phosphate)-DNA + a 5'-end 5'-phospho-2'-deoxyribonucleoside-DNA + H(+). In terms of biological role, involved in base excision repair of DNA damaged by oxidation or by mutagenic agents. Acts as a DNA glycosylase that recognizes and removes damaged bases. Has a preference for oxidized purines, such as 7,8-dihydro-8-oxoguanine (8-oxoG). Has AP (apurinic/apyrimidinic) lyase activity and introduces nicks in the DNA strand. Cleaves the DNA backbone by beta-delta elimination to generate a single-strand break at the site of the removed base with both 3'- and 5'-phosphates. In Lactobacillus johnsonii (strain CNCM I-12250 / La1 / NCC 533), this protein is Formamidopyrimidine-DNA glycosylase.